Here is a 263-residue protein sequence, read N- to C-terminus: Granzyme K (263 aa).

The signal sequence occupies residues 1–21 (MRFSSWALVSLVAGVYMSSEC). Positions 22-25 (FHTE) are cleaved as a propeptide — activation peptide. Positions 26–258 (IIGGREVQPH…YQTWIKSKLA (233 aa)) constitute a Peptidase S1 domain. Residues cysteine 51 and cysteine 67 are joined by a disulfide bond. Active-site charge relay system residues include histidine 66 and aspartate 115. Intrachain disulfides connect cysteine 148–cysteine 219, cysteine 180–cysteine 198, and cysteine 209–cysteine 233. Serine 213 acts as the Charge relay system in catalysis.

Belongs to the peptidase S1 family. Granzyme subfamily.

It localises to the cytoplasmic granule. The chain is Granzyme K (Gzmk) from Mus musculus (Mouse).